Consider the following 273-residue polypeptide: Esterase pigG (273 aa).

Catalysis depends on charge relay system residues S122, D215, and H243.

Belongs to the LovG family.

It functions in the pathway secondary metabolite biosynthesis. Functionally, esterase; part of the gene cluster that mediates the biosynthesis of azaphilone pigments (MonAzPs), a complex mixture of compounds with a common azaphilone skeleton very widely used as food colorants. Within the pathway, pigG may assist the nrPKS pigA in the biosynthesis of the hexaketide precursor. The first step of the pathway is performed by the nrPKS pigA that forms the hexaketide precursor from successive condensations of five malonyl-CoA units, with a simple acetyl-CoA starter unit. The role of esterase pigG is not clear, but it may play at most a supplementary role in the formation of the benzaldehyde produced by the pigA nrPKS. This very reactive benzaldehyde is intercepted by the pigC ketoreductase that to provide the first stable enzyme-free MonAzPs intermediate, 6-(4-hydroxy-2-oxopentyl)-3-methyl-2,4-dioxocyclohexane carbaldehyde, also known as M7PKS-1. The FAD-dependent monooxygenase pigN hydroxylates M7PKS-1 at C-4, which triggers the formation of the pyran ring. PigJ, pigK and pigD are involved in the acetylation of the pyran ring. PigJ and pigK form the two subunits of a dedicated fungal FAS that produces the side chain fatty acyl moiety of MonAzPs and pigD transfers the fatty acyl chain to the C-4 alcohol. PigM and pigO are involved in the elimination of the omega-1 alcohol. PigM acts as an O-acetyltransferase that synthesizes the putative O-11 acetyl intermediate whereas pigO eliminates acetic acid to yield an intermediate with a C10(11) double bond. The dehydration of the C-11 alcohol followed by the reduction of the C6(7) double bond by the NAD(P)H-dependent oxidoreductase pigE increases the electrophilicity of the C-5 ketone of the resulting acyl benzopyran. This in turn sets up the C-5 ketone for an intramolecular Knoevenagel aldol condensation with the C-20 enol of the side chain. This condensation affords the characteristic linear tricyclic carbon skeletons of the yellow pigments that serve as the common precursors for the classical yellow pigments monascin and ankaflavin, orange pigments rubopunctatin and monascorubrin, and red pigments ribropunctamine and monascorubramine. The FAD-dependent oxidoreductase pigF is especially invoved in the biosynthesis of orange and red pigments via desaturation of C6(7). In Monascus ruber (Mold), this protein is Esterase pigG.